The following is a 396-amino-acid chain: KiSS-1 receptor (396 aa).

Topologically, residues 1 to 46 (MAAEATLGPNVSWWAPSNASGCPGCGVNASDGPGSAPRPLDAWLVP) are extracellular. 3 N-linked (GlcNAc...) asparagine glycosylation sites follow: Asn-10, Asn-18, and Asn-28. The chain crosses the membrane as a helical span at residues 47–67 (LFFAALMLLGLVGNSLVIFVI). Topologically, residues 68–90 (CRHKHMQTVTNFYIANLAATDVT) are cytoplasmic. Residues 91 to 111 (FLLCCVPFTALLYPLPTWVLG) form a helical membrane-spanning segment. Residues 112–120 (DFMCKFVNY) are Extracellular-facing. Residues Cys-115 and Cys-191 are joined by a disulfide bond. The helical transmembrane segment at 121 to 138 (IQQVSVQATCATLTAMSV) threads the bilayer. Over 139–159 (DRWYVTVFPLRALHRRTPRLA) the chain is Cytoplasmic. Residues 160–180 (LTVSLSIWVGSAAVSAPVLAL) form a helical membrane-spanning segment. Residues 181-202 (HRLSPGPHTYCSEAFPSRALER) lie on the Extracellular side of the membrane. The chain crosses the membrane as a helical span at residues 203–223 (AFALYNLLALYLLPLLATCAC). Residues 224–264 (YGAMLRHLGRAAVRPAPTDGALQGQLLAQRAGAVRTKVSRL) lie on the Cytoplasmic side of the membrane. A helical membrane pass occupies residues 265–285 (VAAVVLLFAACWGPIQLFLVL). Over 286–305 (QALGPSGAWHPRSYAAYALK) the chain is Extracellular. A helical transmembrane segment spans residues 306-326 (IWAHCMSYSNSALNPLLYAFL). Residues 327–396 (GSHFRQAFCR…SVQDEHTAPL (70 aa)) lie on the Cytoplasmic side of the membrane. A disordered region spans residues 346–396 (RRPHASAHSDRAAPHSVPHSRAAHPVRVRTPEPGNPVRRSPSVQDEHTAPL).

It belongs to the G-protein coupled receptor 1 family. Highest expression levels in the cerebrum and cecum. Moderate expression in the ovary, colon and placenta. Low levels in the uterus, small intestine, and thymus. Expressed only moderately in the placenta. No expression in kidney tissues. Has a complex and abundant central nervous system expression pattern. Expressed in brain regions such as pons, midbrain, thalamus, hypothalamus, hippocampus, amygdala, cortex, frontal cortex, and striatum. No expression in the cerebellum. Persistent expression is detected in hypothalamus throughout postnatal development, with maximum expression levels at puberty in both male and female. Hypothalamic expression changed throughout the estrus cycle and is significantly increased after gonadectomy, a rise that is prevented by sex steroid replacement both in males and females.

The protein resides in the cell membrane. Receptor for metastin, a C-terminally amidated peptide of KiSS1. KiSS1 is a metastasis suppressor protein. Activation of the receptor inhibits cell proliferation and cell migration, key characteristics of tumor metastasis. The receptor is essential for normal gonadotropin-released hormone physiology and for puberty. The hypothalamic KiSS1/KISS1R system is a pivotal factor in central regulation of the gonadotropic axis at puberty and in adulthood. Analysis of the transduction pathways activated by the receptor identifies coupling to phospholipase C and intracellular calcium release through pertussis toxin-insensitive G(q) proteins. The sequence is that of KiSS-1 receptor (Kiss1r) from Rattus norvegicus (Rat).